The sequence spans 296 residues: Killer toxin KHR (296 aa).

Positions 1–20 (MGHLAILFSIIAVLNIATAV) are cleaved as a signal peptide. 4 N-linked (GlcNAc...) asparagine glycosylation sites follow: asparagine 46, asparagine 71, asparagine 122, and asparagine 146.

To yeast YER076C.

Functionally, kills sensitive strains of yeast. The chain is Killer toxin KHR (KHR1) from Saccharomyces cerevisiae (Baker's yeast).